The chain runs to 200 residues: Cytochrome c biogenesis ATP-binding export protein CcmA (200 aa).

Residues 3–200 (LSGRGLRCVR…AREMRIGAAA (198 aa)) enclose the ABC transporter domain. 35–42 (GHNGAGKT) provides a ligand contact to ATP.

This sequence belongs to the ABC transporter superfamily. CcmA exporter (TC 3.A.1.107) family. As to quaternary structure, the complex is composed of two ATP-binding proteins (CcmA) and two transmembrane proteins (CcmB).

It localises to the cell inner membrane. It catalyses the reaction heme b(in) + ATP + H2O = heme b(out) + ADP + phosphate + H(+). Its function is as follows. Part of the ABC transporter complex CcmAB involved in the biogenesis of c-type cytochromes; once thought to export heme, this seems not to be the case, but its exact role is uncertain. Responsible for energy coupling to the transport system. The sequence is that of Cytochrome c biogenesis ATP-binding export protein CcmA from Rhodopseudomonas palustris (strain BisB5).